The chain runs to 108 residues: Peptidyl-prolyl cis-trans isomerase FKBP1A (108 aa).

Residues 20-108 (GQTCVVHYTG…VFDVELLKLE (89 aa)) enclose the PPIase FKBP-type domain. Lys-53 is modified (N6-acetyllysine; alternate). Position 53 is an N6-succinyllysine; alternate (Lys-53).

It belongs to the FKBP-type PPIase family. FKBP1 subfamily. In terms of assembly, interacts with TGFBR1; prevents TGFBR1 phosphorylation by TGFBR2 and stabilizes it in the inactive conformation. Interacts with ACVR1B and SMAD7. Identified in a complex composed of RYR1, PDE4D, PKA, FKBP1A and protein phosphatase 1 (PP1). Interacts directly with RYR2 and RYR3. Interacts with GLMN; rapamycin and FK506 abolish the interaction with GLMN in a dose dependent manner. Interacts directly with RYR1.

It is found in the cytoplasm. Its subcellular location is the cytosol. It localises to the sarcoplasmic reticulum membrane. It catalyses the reaction [protein]-peptidylproline (omega=180) = [protein]-peptidylproline (omega=0). Inhibited by both FK506 and rapamycin. Functionally, keeps in an inactive conformation TGFBR1, the TGF-beta type I serine/threonine kinase receptor, preventing TGF-beta receptor activation in absence of ligand. Recruits SMAD7 to ACVR1B which prevents the association of SMAD2 and SMAD3 with the activin receptor complex, thereby blocking the activin signal. May modulate the RYR1 calcium channel activity. PPIases accelerate the folding of proteins. It catalyzes the cis-trans isomerization of proline imidic peptide bonds in oligopeptides. In Homo sapiens (Human), this protein is Peptidyl-prolyl cis-trans isomerase FKBP1A (FKBP1A).